The chain runs to 72 residues: Penaeidin-2a (72 aa).

The N-terminal stretch at 1 to 21 is a signal peptide; it reads MRLVVCLVFLASFALVCQGEA. 3 disulfides stabilise this stretch: C45–C59, C48–C66, and C60–C67. Lysine amide is present on K71.

Higher expression in hemocytes and to a lesser extent in heart, testis, gills, intestine, lymphoid organ and hepatopancreas. Traces in eyes and subcuticular epithelium. Not present in the brain.

The protein localises to the cytoplasmic granule. Antibacterial activity against M.luteus and E.coli bacteria. Antifungal activity against N.crassa and F.oxysporum. Presents chitin-binding activity. The protein is Penaeidin-2a of Penaeus vannamei (Whiteleg shrimp).